A 653-amino-acid chain; its full sequence is Transcription factor Ken 1 (653 aa).

The BTB domain occupies 35–103 (TDLLLICDGK…LYSGQVYVRS (69 aa)). Disordered regions lie at residues 126 to 215 (NSDG…DRDR), 234 to 305 (NNHP…SDDA), 429 to 451 (LSNNNNSSSNNNNNNNRIRPPSA), and 512 to 534 (ELSARASAAGGGGGGSGGNGSGS). A compositionally biased stretch (polar residues) spans 145 to 157 (NRNTEGITGSSVV). Over residues 251–272 (GHHHHHHHHHHHRQLHQIKTRS) the composition is skewed to basic residues. Residues 286 to 299 (SDPVNLSIVKQQQD) are compositionally biased toward polar residues. Residues 430–444 (SNNNNSSSNNNNNNN) are compositionally biased toward low complexity. The span at 520–534 (AGGGGGGSGGNGSGS) shows a compositional bias: gly residues. C2H2-type zinc fingers lie at residues 555–577 (YRCEYCGKTFGMSWNLKTHLRVH), 583–606 (FACRLCVAMFKQKAHLLKHLCSVH), and 619–641 (YTCCFCSLVFETLQELVRHLSGH).

The protein resides in the nucleus. In terms of biological role, transcription factor required for terminalia development. Negative regulator of the JAK/STAT pathway: represses JAK/STAT-dependent expression of ventral veins lacking (vvl) in the posterior spiracles. This is Transcription factor Ken 1 from Culex quinquefasciatus (Southern house mosquito).